Reading from the N-terminus, the 335-residue chain is Malate dehydrogenase 1 (335 aa).

NAD(+) is bound by residues 11 to 16 (GAGNVG) and aspartate 35. 2 residues coordinate substrate: arginine 97 and arginine 103. NAD(+) is bound by residues asparagine 110 and 133–135 (VTN). Substrate is bound by residues asparagine 135 and arginine 166. Catalysis depends on histidine 190, which acts as the Proton acceptor.

It belongs to the LDH/MDH superfamily. MDH type 3 family.

The catalysed reaction is (S)-malate + NAD(+) = oxaloacetate + NADH + H(+). Its function is as follows. Catalyzes the reversible oxidation of malate to oxaloacetate. This is Malate dehydrogenase 1 (mdh1) from Aquifex aeolicus (strain VF5).